We begin with the raw amino-acid sequence, 119 residues long: UPF0102 protein CGSHiGG_01960 (119 aa).

The protein belongs to the UPF0102 family.

This Haemophilus influenzae (strain PittGG) protein is UPF0102 protein CGSHiGG_01960.